A 326-amino-acid chain; its full sequence is Diaminopimelate epimerase (326 aa).

Residues Asn-13 and Asn-72 each coordinate substrate. Cys-81 functions as the Proton donor in the catalytic mechanism. Substrate contacts are provided by residues 82-83, Asn-169, Asn-205, and 223-224; these read GN and ER. Cys-232 (proton acceptor) is an active-site residue. 233–234 is a binding site for substrate; it reads GT.

Belongs to the diaminopimelate epimerase family. In terms of assembly, homodimer.

Its subcellular location is the cytoplasm. The catalysed reaction is (2S,6S)-2,6-diaminopimelate = meso-2,6-diaminopimelate. Its pathway is amino-acid biosynthesis; L-lysine biosynthesis via DAP pathway; DL-2,6-diaminopimelate from LL-2,6-diaminopimelate: step 1/1. Its function is as follows. Catalyzes the stereoinversion of LL-2,6-diaminopimelate (L,L-DAP) to meso-diaminopimelate (meso-DAP), a precursor of L-lysine and an essential component of the bacterial peptidoglycan. This Enterococcus faecalis (strain ATCC 700802 / V583) protein is Diaminopimelate epimerase.